Consider the following 250-residue polypeptide: 3-deoxy-manno-octulosonate cytidylyltransferase (250 aa).

It belongs to the KdsB family.

It is found in the cytoplasm. The catalysed reaction is 3-deoxy-alpha-D-manno-oct-2-ulosonate + CTP = CMP-3-deoxy-beta-D-manno-octulosonate + diphosphate. The protein operates within nucleotide-sugar biosynthesis; CMP-3-deoxy-D-manno-octulosonate biosynthesis; CMP-3-deoxy-D-manno-octulosonate from 3-deoxy-D-manno-octulosonate and CTP: step 1/1. Its pathway is bacterial outer membrane biogenesis; lipopolysaccharide biosynthesis. In terms of biological role, activates KDO (a required 8-carbon sugar) for incorporation into bacterial lipopolysaccharide in Gram-negative bacteria. In Actinobacillus pleuropneumoniae serotype 7 (strain AP76), this protein is 3-deoxy-manno-octulosonate cytidylyltransferase.